Here is a 421-residue protein sequence, read N- to C-terminus: MPATDIDTAMLALGENARRASRAMMRATGAAKNHALQAMAEALRDNRAELQAANAQDIDAARAGGLEPALLDRLTLSDKAIDRMAEGLLQVAALPDPIGSTTASALRPNGMRVAQMRVPLGVIGIIYESRPNVTIDAAALCLKSGNATILRGGSEALHSNVALGRIVQAGLQAAALPAEAVQVVGTTDRAAVGKLITMTEHIDVIVPRGGKGLIARLASEARVPLIKHLDGNCHVYIDAAADPQKAHTIAFNAKTYRYGICGAMETLLVDAGVAVSILPRLAAAFSAHGVELRGCPRTLEIVPSATPATDDDWATEYLAPILAVRIVDSLDQAIEHIARWGSGHTDAIVTEDLSAAQRFQREVDSSSVYVNLPTCFADGFEYGLGAEIGISTNRLHARGPVGLEGLTTLKWVLNGDGQTRG.

It belongs to the gamma-glutamyl phosphate reductase family.

Its subcellular location is the cytoplasm. The catalysed reaction is L-glutamate 5-semialdehyde + phosphate + NADP(+) = L-glutamyl 5-phosphate + NADPH + H(+). The protein operates within amino-acid biosynthesis; L-proline biosynthesis; L-glutamate 5-semialdehyde from L-glutamate: step 2/2. Functionally, catalyzes the NADPH-dependent reduction of L-glutamate 5-phosphate into L-glutamate 5-semialdehyde and phosphate. The product spontaneously undergoes cyclization to form 1-pyrroline-5-carboxylate. This Bordetella petrii (strain ATCC BAA-461 / DSM 12804 / CCUG 43448) protein is Gamma-glutamyl phosphate reductase.